A 149-amino-acid polypeptide reads, in one-letter code: Transcriptional repressor NrdR (149 aa).

A zinc finger spans residues 3 to 34 (CPFCAAVDTKVIDSRLVSDGSQVRRRRQCLDC). The 91-residue stretch at 49-139 (PRVIKSDDVR…VYRSFEDIRE (91 aa)) folds into the ATP-cone domain.

This sequence belongs to the NrdR family. Zn(2+) is required as a cofactor.

Functionally, negatively regulates transcription of bacterial ribonucleotide reductase nrd genes and operons by binding to NrdR-boxes. The chain is Transcriptional repressor NrdR from Yersinia enterocolitica serotype O:8 / biotype 1B (strain NCTC 13174 / 8081).